A 485-amino-acid polypeptide reads, in one-letter code: Lysophospholipid acyltransferase 5 (485 aa).

N-acetylalanine is present on A2. Transmembrane regions (helical) follow at residues 35–55 (ASEQALRLIISIFLGYPFALF), 82–102 (YNFGTQLYHSLLCIVLQFLIL), 108–128 (TITAVLTTFCVQMGYLLAGYY), 139–158 (WTMPHCVLTLKLIGLAMDYY), 176–196 (IWGVPSLLEISGFSYFYGAFL), 232–252 (LALGLVYLVGYTLLSPHITED), and 283–303 (VTCWLVTEGVCILTGLGFNGL). Residues N336 and H372 contribute to the active site. 3 helical membrane passes run 362-382 (GLSLLFLALWHGLHSGYLVCF), 420-440 (LAQQTIHWLFMGYSMTAFCLF), and 448-468 (VYKSIYFLGHVFFLSLLFILP). Residues 482–485 (KKME) carry the Di-lysine motif motif.

It belongs to the membrane-bound acyltransferase family.

The protein localises to the endoplasmic reticulum membrane. The catalysed reaction is a 1-acyl-sn-glycero-3-phosphocholine + an acyl-CoA = a 1,2-diacyl-sn-glycero-3-phosphocholine + CoA. It catalyses the reaction a 1-acyl-sn-glycero-3-phosphoethanolamine + an acyl-CoA = a 1,2-diacyl-sn-glycero-3-phosphoethanolamine + CoA. The enzyme catalyses a 1-acyl-sn-glycero-3-phospho-L-serine + an acyl-CoA = a 1,2-diacyl-sn-glycero-3-phospho-L-serine + CoA. It carries out the reaction (9Z,12Z)-octadecadienoyl-CoA + a 1-acyl-sn-glycero-3-phosphocholine = 1-acyl-2-(9Z,12Z)-octadecadienoyl-sn-glycero-3-phosphocholine + CoA. The catalysed reaction is (5Z,8Z,11Z,14Z)-eicosatetraenoyl-CoA + a 1-acyl-sn-glycero-3-phosphocholine = 1-acyl-2-(5Z,8Z,11Z,14Z-eicosatetraenoyl)-sn-glycero-3-phosphocholine + CoA. It catalyses the reaction dodecanoyl-CoA + 1-hexadecanoyl-sn-glycero-3-phosphocholine = 1-hexadecanoyl-2-dodecanoyl-sn-glycero-3-phosphocholine + CoA. The enzyme catalyses octadecanoyl-CoA + 1-hexadecanoyl-sn-glycero-3-phosphocholine = 1-hexadecanoyl-2-octadecanoyl-sn-glycero-3-phosphocholine + CoA. It carries out the reaction 1-dodecanoyl-sn-glycero-3-phosphocholine + hexadecanoyl-CoA = 1-dodecanoyl-2-hexadecanoyl-sn-glycero-3-phosphocholine + CoA. The catalysed reaction is 1-tetradecanoyl-sn-glycero-3-phosphocholine + hexadecanoyl-CoA = 1-tetradecanoyl-2-hexadecanoyl-sn-glycero-3-phosphocholine + CoA. It catalyses the reaction 1-hexadecanoyl-sn-glycero-3-phosphocholine + hexadecanoyl-CoA = 1,2-dihexadecanoyl-sn-glycero-3-phosphocholine + CoA. The enzyme catalyses 1-octadecanoyl-sn-glycero-3-phosphocholine + hexadecanoyl-CoA = 1-octadecanoyl-2-hexadecanoyl-sn-glycero-3-phosphocholine + CoA. It carries out the reaction 1-(9Z-octadecenoyl)-sn-glycero-3-phosphocholine + hexadecanoyl-CoA = 1-(9Z-octadecenoyl)-2-hexadecanoyl-sn-glycero-3-phosphocholine + CoA. The catalysed reaction is (9Z)-hexadecenoyl-CoA + 1-hexadecanoyl-sn-glycero-3-phosphocholine = 1-hexadecanoyl-2-(9Z-hexadecenoyl)-sn-glycero-3-phosphocholine + CoA. It catalyses the reaction 1-hexadecanoyl-sn-glycero-3-phosphocholine + (9Z)-octadecenoyl-CoA = 1-hexadecanoyl-2-(9Z-octadecenoyl)-sn-glycero-3-phosphocholine + CoA. The enzyme catalyses (9Z,12Z)-octadecadienoyl-CoA + 1-hexadecanoyl-sn-glycero-3-phosphocholine = 1-hexadecanoyl-2-(9Z,12Z-octadecadienoyl)-sn-glycero-3-phosphocholine + CoA. It carries out the reaction 1-dodecanoyl-sn-glycero-3-phosphocholine + (5Z,8Z,11Z,14Z)-eicosatetraenoyl-CoA = 1-dodecanoyl-2-(5Z,8Z,11Z,14Z)-eicosatetraenoyl-sn-glycero-3-phosphocholine + CoA. The catalysed reaction is (5Z,8Z,11Z,14Z)-eicosatetraenoyl-CoA + 1-hexadecanoyl-sn-glycero-3-phosphocholine = 1-hexadecanoyl-2-(5Z,8Z,11Z,14Z-eicosatetraenoyl)-sn-glycero-3-phosphocholine + CoA. It catalyses the reaction 1-octadecanoyl-sn-glycero-3-phosphocholine + (5Z,8Z,11Z,14Z)-eicosatetraenoyl-CoA = 1-octadecanoyl-2-(5Z,8Z,11Z,14Z-eicosatetraenoyl)-sn-glycero-3-phosphocholine + CoA. The enzyme catalyses 1-eicosanoyl-sn-glycero-3-phosphocholine + (5Z,8Z,11Z,14Z)-eicosatetraenoyl-CoA = 1-eicosanoyl-2-(5Z,8Z,11Z,14Z)-eicosatetraenoyl-sn-glycero-3-phosphocholine + CoA. It carries out the reaction 1-(9Z-octadecenoyl)-sn-glycero-3-phosphocholine + (9Z)-octadecenoyl-CoA = 1,2-di-(9Z-octadecenoyl)-sn-glycero-3-phosphocholine + CoA. The catalysed reaction is 1-(9Z-octadecenoyl)-sn-glycero-3-phosphocholine + (9Z,12Z)-octadecadienoyl-CoA = 1-(9Z)-octadecenoyl-2-(9Z,12Z)-octadecadienoyl-sn-glycero-3-phosphocholine + CoA. It catalyses the reaction 1-(9Z-octadecenoyl)-sn-glycero-3-phosphocholine + (5Z,8Z,11Z,14Z)-eicosatetraenoyl-CoA = 1-(9Z)-octadecenoyl-2-(5Z,8Z,11Z,14Z)-icosatetraenoyl-sn-glycero-3-phosphocholine + CoA. The enzyme catalyses a 1-acyl-sn-glycero-3-phosphoethanolamine + (9Z,12Z)-octadecadienoyl-CoA = 1-acyl-2-(9Z,12Z)-octadecadienoyl-sn-glycero-3-phosphoethanolamine + CoA. It carries out the reaction 1-(9Z-octadecenoyl)-sn-glycero-3-phosphoethanolamine + (9Z,12Z)-octadecadienoyl-CoA = 1-(9Z)-octadecenoyl-2-(9Z,12Z)-octadecadienoyl-sn-glycero-3-phosphoethanolamine + CoA. The catalysed reaction is 1-(10Z-heptadecenoyl)-sn-glycero-3-phosphoethanolamine + (9Z,12Z)-octadecadienoyl-CoA = 1-(10Z-heptadecenoyl)-2-(9Z,12Z-octadecadienoyl)-sn-glycero-3-phosphoethanolamine + CoA. It catalyses the reaction a 1-acyl-sn-glycero-3-phosphoethanolamine + (5Z,8Z,11Z,14Z)-eicosatetraenoyl-CoA = 1-acyl-2-(5Z,8Z,11Z,14Z)-eicosatetraenoyl-sn-glycero-3-phosphoethanolamine + CoA. The enzyme catalyses 1-hexadecanoyl-sn-glycero-3-phosphoethanolamine + (5Z,8Z,11Z,14Z)-eicosatetraenoyl-CoA = 1-hexadecanoyl-2-(5Z,8Z,11Z,14Z-eicosatetraenoyl)-sn-glycero-3-phosphoethanolamine + CoA. It carries out the reaction 1-(9Z-octadecenoyl)-sn-glycero-3-phosphoethanolamine + (5Z,8Z,11Z,14Z)-eicosatetraenoyl-CoA = 1-(9Z)-octadecenoyl-2-(5Z,8Z,11Z,14Z)-eicosatetraenoyl-sn-glycero-3-phosphoethanolamine + CoA. The catalysed reaction is 1-(10Z-heptadecenoyl)-sn-glycero-3-phosphoethanolamine + (5Z,8Z,11Z,14Z)-eicosatetraenoyl-CoA = 1-(10Z-heptadecenoyl)-2-(5Z,8Z,11Z,14Z-eicosatetraenoyl)-sn-glycero-3-phosphoethanolamine + CoA. It catalyses the reaction a 1-O-(1Z-alkenyl)-sn-glycero-3-phosphoethanolamine + (5Z,8Z,11Z,14Z)-eicosatetraenoyl-CoA = 1-O-(1Z)-alkenyl-2-(5Z,8Z,11Z,14Z)-eicosatetraenoyl-sn-glycero-3-phosphoethanolamine + CoA. The enzyme catalyses a 1-acyl-sn-glycero-3-phospho-L-serine + (9Z,12Z)-octadecadienoyl-CoA = 1-acyl-2-(9Z,12Z-octadecadienoyl)-sn-glycero-3-phospho-L-serine + CoA. It carries out the reaction a 1-acyl-sn-glycero-3-phospho-L-serine + (5Z,8Z,11Z,14Z)-eicosatetraenoyl-CoA = 1-acyl-2-(5Z,8Z,11Z,14Z-eicosatetraenoyl)-sn-glycero-3-phospho-L-serine + CoA. The catalysed reaction is 1-hexadecanoyl-sn-glycero-3-phospho-L-serine + (9Z)-octadecenoyl-CoA = 1-hexadecanoyl-2-(9Z-octadecenoyl)-sn-glycero-3-phospho-L-serine + CoA. It catalyses the reaction 1-(9Z-octadecenoyl)-sn-glycero-3-phospho-L-serine + (9Z)-octadecenoyl-CoA = 1,2-di-(9Z)-octadecenoyl-sn-glycero-3-phospho-L-serine + CoA. The enzyme catalyses 1-hexadecanoyl-sn-glycero-3-phospho-L-serine + (9Z,12Z)-octadecadienoyl-CoA = 1-hexadecanoyl-2-(9Z,12Z-octadecadienoyl)-sn-glycero-3-phospho-L-serine + CoA. It carries out the reaction 1-(9Z-octadecenoyl)-sn-glycero-3-phospho-L-serine + (9Z,12Z)-octadecadienoyl-CoA = 1-(9Z-octadecenoyl)-2-(9Z,12Z-octadienoyl)-sn-glycero-3-phospho-L-serine + CoA. The catalysed reaction is 1-hexadecanoyl-sn-glycero-3-phospho-L-serine + (5Z,8Z,11Z,14Z)-eicosatetraenoyl-CoA = 1-hexadecanoyl-2-(5Z,8Z,11Z,14Z-eicosatetraenoyl)-sn-glycero-3-phospho-L-serine + CoA. It catalyses the reaction 1-(9Z-octadecenoyl)-sn-glycero-3-phospho-L-serine + (5Z,8Z,11Z,14Z)-eicosatetraenoyl-CoA = 1-(9Z-octadecenoyl)-2-(5Z,8Z,11Z,14Z-eicosatetraenoyl)-sn-glycero-3-phospho-L-serine + CoA. It functions in the pathway lipid metabolism; phospholipid metabolism. Functionally, lysophospholipid O-acyltransferase (LPLAT) that catalyzes the reacylation step of the phospholipid remodeling process also known as the Lands cycle. Catalyzes transfer of the fatty acyl chain from fatty acyl-CoA to 1-acyl lysophospholipid to form various classes of phospholipids. Converts 1-acyl lysophosphatidylcholine (LPC) into phosphatidylcholine (PC) (LPCAT activity), 1-acyl lysophosphatidylserine (LPS) into phosphatidylserine (PS) (LPSAT activity) and 1-acyl lysophosphatidylethanolamine (LPE) into phosphatidylethanolamine (PE) (LPEAT activity). Favors polyunsaturated fatty acyl-CoAs as acyl donors compared to saturated fatty acyl-CoAs. Has higher activity for LPC acyl acceptors compared to LPEs and LPSs. Can also transfer the fatty acyl chain from fatty acyl-CoA to 1-O-alkyl lysophospholipid or 1-O-alkenyl lysophospholipid with lower efficiency. Acts as a major LPC O-acyltransferase in liver and intestine. As a component of the liver X receptor/NR1H3 or NR1H2 signaling pathway, mainly catalyzes the incorporation of arachidonate into PCs of endoplasmic reticulum (ER) membranes, increasing membrane dynamics and enabling triacylglycerols transfer to nascent very low-density lipoprotein (VLDL) particles. Promotes processing of sterol regulatory protein SREBF1 in hepatocytes, likely by facilitating the translocation of SREBF1-SCAP complex from ER to the Golgi apparatus. Participates in mechanisms by which the liver X receptor/NR1H3 or NR1H2 signaling pathway counteracts lipid-induced ER stress response and inflammation. Down-regulates hepatic inflammation by limiting arachidonic acid availability for synthesis of inflammatory eicosanoids, such as prostaglandins. In enterocytes, acts as a component of a gut-brain feedback loop that coordinates dietary lipid absorption and food intake. Regulates the abundance of PCs containing linoleate and arachidonate in enterocyte membranes, enabling passive diffusion of fatty acids and cholesterol across the membrane for efficient chylomicron assembly. In the intestinal crypt, acts as a component of dietary-responsive phospholipid-cholesterol axis, regulating the biosynthesis of cholesterol and its mitogenic effects on intestinal stem cells. The polypeptide is Lysophospholipid acyltransferase 5 (LPCAT3) (Bos taurus (Bovine)).